Here is a 369-residue protein sequence, read N- to C-terminus: NAD-dependent epimerase/dehydratase FUM13 (369 aa).

Tyr-176 provides a ligand contact to NADP(+).

The protein belongs to the NAD(P)-dependent epimerase/dehydratase family. Dihydroflavonol-4-reductase subfamily.

It functions in the pathway mycotoxin biosynthesis. Its function is as follows. NAD-dependent epimerase/dehydratase; part of the gene cluster that mediates the biosynthesis of fumonisins B1 (FB1), B2 (FB2), B3 (FB3), and B4 (FB4), which are carcinogenic mycotoxins. Within the pathway, FUM13 stereospecifically reduces the intermediate 3-keto intermediate 2-amino-3-oxo-12,16-dimethylicosane to the 3-hydroxyl product 2-amino-3-hydroxy-12,16-dimethylicosane. The biosynthesis starts with the FUM1-catalyzed carbon chain assembly from one molecule of acetyl-CoA, eight molecules of malonyl-CoA, and two molecules of methionine (in S-adenosyl form). The C18 polyketide chain is released from the enzyme by a nucleophilic attack of a carbanion, which is derived from R-carbon of alanine by decarboxylation, on the carbonyl carbon of polyketide acyl chain. This step is catalyzed by the pyridoxal 5'-phosphate-dependent aminoacyl transferase FUM8. The resultant 3-keto intermediate is then stereospecifically reduced to a 3-hydroxyl product by reductase FUM13. Subsequent oxidations at C-10 by the cytochrome P450 monooxygenase FUM2, C-14 and C-15 by FUM6, FUM12 or FUM15, tricarballylic esterification of the hydroxyl groups on C-14 and C-15 by acyltransferase FUM14, and C-5 hydroxylation by 2-keto-glutarate-dependent dioxygenase FUM3 furnish the biosynthesis of fumonisins. The tricarballylic moieties are most likely derived from the citric acid cycle, and their addition to the carbon backbone may involve FUM7, FUM10, FUM11 and FUM14. In Gibberella moniliformis (strain M3125 / FGSC 7600) (Maize ear and stalk rot fungus), this protein is NAD-dependent epimerase/dehydratase FUM13.